A 305-amino-acid polypeptide reads, in one-letter code: tRNA uridine(34) hydroxylase (305 aa).

One can recognise a Rhodanese domain in the interval 125–219 (ADENTVVVDK…YLEEVPREQS (95 aa)). Cys-179 acts as the Cysteine persulfide intermediate in catalysis.

Belongs to the TrhO family.

It catalyses the reaction uridine(34) in tRNA + AH2 + O2 = 5-hydroxyuridine(34) in tRNA + A + H2O. Functionally, catalyzes oxygen-dependent 5-hydroxyuridine (ho5U) modification at position 34 in tRNAs. The polypeptide is tRNA uridine(34) hydroxylase (Brucella abortus (strain S19)).